The chain runs to 83 residues: MSSGGLLLLLGLLTLWEVLTPVSSKDRPDFCELPADTGPCRVRFPSFYYNPDEKKCLEFIYGGCEGNANNFITKEECESTCAA.

The N-terminal stretch at 1 to 24 (MSSGGLLLLLGLLTLWEVLTPVSS) is a signal peptide. The BPTI/Kunitz inhibitor domain maps to 31-81 (CELPADTGPCRVRFPSFYYNPDEKKCLEFIYGGCEGNANNFITKEECESTC). 3 disulfide bridges follow: C31/C81, C40/C64, and C56/C77.

It belongs to the venom Kunitz-type family. In terms of tissue distribution, expressed by the venom gland.

It localises to the secreted. Its function is as follows. Strongly inhibits plasmin (Ki=0.44 nM) and trypsin (Ki=0.42 nM). Has little effect on plasma (Ki=1870 nM) and tissue (Ki=12900 nM) kallikreins. Its plasmin-inhibiting activity makes it an antifibrinolytic agent. In vivo, reduces blood loss in a mouse tail vein bleeding model. The polypeptide is Kunitz-type serine protease inhibitor textilinin-1 (Pseudonaja textilis textilis (Eastern brown snake)).